The chain runs to 242 residues: Ribonuclease PH (242 aa).

Phosphate contacts are provided by residues arginine 86 and 124–126 (GTR).

Belongs to the RNase PH family. Homohexameric ring arranged as a trimer of dimers.

The enzyme catalyses tRNA(n+1) + phosphate = tRNA(n) + a ribonucleoside 5'-diphosphate. Its function is as follows. Phosphorolytic 3'-5' exoribonuclease that plays an important role in tRNA 3'-end maturation. Removes nucleotide residues following the 3'-CCA terminus of tRNAs; can also add nucleotides to the ends of RNA molecules by using nucleoside diphosphates as substrates, but this may not be physiologically important. Probably plays a role in initiation of 16S rRNA degradation (leading to ribosome degradation) during starvation. The chain is Ribonuclease PH from Photorhabdus laumondii subsp. laumondii (strain DSM 15139 / CIP 105565 / TT01) (Photorhabdus luminescens subsp. laumondii).